The chain runs to 301 residues: Averufin oxidase A (301 aa).

An N-terminal signal peptide occupies residues 1–23 (MPTYALLGATGATGSAILRCLLA). Asn-62, Asn-86, and Asn-190 each carry an N-linked (GlcNAc...) asparagine glycan.

Belongs to the avfA family.

The protein operates within mycotoxin biosynthesis. Averufin oxidase A; part of the fragmented gene cluster that mediates the biosynthesis of dothistromin (DOTH), a polyketide toxin very similar in structure to the aflatoxin precursor, versicolorin B. The first step of the pathway is the conversion of acetate to norsolorinic acid (NOR) and requires the fatty acid synthase subunits hexA and hexB, as well as the polyketide synthase pksA. PksA combines a hexanoyl starter unit and 7 malonyl-CoA extender units to synthesize the precursor NOR. The hexanoyl starter unit is provided to the acyl-carrier protein (ACP) domain by the fungal fatty acid synthase hexA/hexB. The second step is the conversion of NOR to averantin (AVN) and requires the norsolorinic acid ketoreductase nor1, which catalyzes the dehydration of norsolorinic acid to form (1'S)-averantin. The cytochrome P450 monooxygenase avnA then catalyzes the hydroxylation of AVN to 5'hydroxyaverantin (HAVN). The next step is performed by adhA that transforms HAVN to averufin (AVF). Averufin might then be converted to hydroxyversicolorone by cypX and avfA. Hydroxyversicolorone is further converted versiconal hemiacetal acetate (VHA) by moxY. VHA is then the substrate for the versiconal hemiacetal acetate esterase est1 to yield versiconal (VAL). Versicolorin B synthase vbsA then converts VAL to versicolorin B (VERB) by closing the bisfuran ring. Then, the activity of the versicolorin B desaturase verB leads to versicolorin A (VERA). DotB, a predicted chloroperoxidase, may perform epoxidation of the A-ring of VERA. Alternatively, a cytochrome P450, such as cypX or avnA could catalyze this step. It is also possible that another, uncharacterized, cytochrome P450 enzyme is responsible for this step. Opening of the epoxide could potentially be achieved by the epoxide hydrolase epoA. However, epoA seems not to be required for DOTH biosynthesis, but other epoxide hydrolases may have the ability to complement this hydrolysis. Alternatively, opening of the epoxide ring could be achieved non-enzymatically. The next step is the deoxygenation of ring A to yield the 5,8-dihydroxyanthraquinone which is most likely catalyzed by the NADPH dehydrogenase encoded by ver1. The last stages of DOTH biosynthesis are proposed to involve hydroxylation of the bisfuran. OrdB and norB might have oxidative roles here. An alternative possibility is that cytochrome P450 monoogenases such as avnA and cypX might perform these steps in addition to previously proposed steps. This Dothistroma septosporum (Red band needle blight fungus) protein is Averufin oxidase A.